The following is a 366-amino-acid chain: tRNA 2-selenouridine synthase (366 aa).

In terms of domain architecture, Rhodanese spans 12–135 (FLNDVPMMDA…MRTFLLDTLH (124 aa)). Catalysis depends on C95, which acts as the S-selanylcysteine intermediate.

It belongs to the SelU family. Monomer.

It carries out the reaction 5-methylaminomethyl-2-thiouridine(34) in tRNA + selenophosphate + (2E)-geranyl diphosphate + H2O + H(+) = 5-methylaminomethyl-2-selenouridine(34) in tRNA + (2E)-thiogeraniol + phosphate + diphosphate. The catalysed reaction is 5-methylaminomethyl-2-thiouridine(34) in tRNA + (2E)-geranyl diphosphate = 5-methylaminomethyl-S-(2E)-geranyl-thiouridine(34) in tRNA + diphosphate. It catalyses the reaction 5-methylaminomethyl-S-(2E)-geranyl-thiouridine(34) in tRNA + selenophosphate + H(+) = 5-methylaminomethyl-2-(Se-phospho)selenouridine(34) in tRNA + (2E)-thiogeraniol. The enzyme catalyses 5-methylaminomethyl-2-(Se-phospho)selenouridine(34) in tRNA + H2O = 5-methylaminomethyl-2-selenouridine(34) in tRNA + phosphate. In terms of biological role, involved in the post-transcriptional modification of the uridine at the wobble position (U34) of tRNA(Lys), tRNA(Glu) and tRNA(Gln). Catalyzes the conversion of 2-thiouridine (S2U-RNA) to 2-selenouridine (Se2U-RNA). Acts in a two-step process involving geranylation of 2-thiouridine (S2U) to S-geranyl-2-thiouridine (geS2U) and subsequent selenation of the latter derivative to 2-selenouridine (Se2U) in the tRNA chain. This is tRNA 2-selenouridine synthase from Pseudomonas syringae pv. syringae (strain B728a).